The sequence spans 200 residues: LexA repressor (200 aa).

A DNA-binding region (H-T-H motif) is located at residues 27–47 (VREICNAVELRSTSTVHGHLK). Catalysis depends on for autocatalytic cleavage activity residues serine 124 and lysine 161.

The protein belongs to the peptidase S24 family. As to quaternary structure, homodimer.

It carries out the reaction Hydrolysis of Ala-|-Gly bond in repressor LexA.. Its function is as follows. Represses a number of genes involved in the response to DNA damage (SOS response), including recA and lexA. In the presence of single-stranded DNA, RecA interacts with LexA causing an autocatalytic cleavage which disrupts the DNA-binding part of LexA, leading to derepression of the SOS regulon and eventually DNA repair. This chain is LexA repressor, found in Clostridium tetani (strain Massachusetts / E88).